We begin with the raw amino-acid sequence, 445 residues long: Sporulation protein YkvU (445 aa).

The next 12 helical transmembrane spans lie at 7-29 (GIIL…NMIL), 39-61 (GLYM…ELPI), 82-104 (AFRM…LPFI), 109-131 (TYHP…TSIA), 144-166 (IAIA…FQWY), 172-194 (MAVL…YLYS), 237-259 (VNAI…GTAA), 269-291 (VAVT…MIPS), 312-334 (IFIT…GPLT), 349-371 (LLWP…IGMG), 376-395 (AFYH…YVLG), and 400-422 (LQML…LHYA).

The protein resides in the forespore membrane. In Bacillus subtilis (strain 168), this protein is Sporulation protein YkvU (ykvU).